We begin with the raw amino-acid sequence, 189 residues long: Low affinity inorganic phosphate transporter 2 (189 aa).

Residues 1–55 lie on the Cytoplasmic side of the membrane; the sequence is TARYTALVAKDAKRAAADMGKVLHVEIDPEDAKVERMAKDESNQFGLFSWEFVRR. The chain crosses the membrane as a helical span at residues 56–76; the sequence is HGLHLFGTCSTWFLLDIAFYS. Residues 77 to 111 are Extracellular-facing; the sequence is QNLFQKDVFTAIGWIPPAKTMNAVQEVYKIARAQT. Residues 112-132 form a helical membrane-spanning segment; that stretch reads LIALCSTVPGYWFTVAFIDII. Residues 133–134 lie on the Cytoplasmic side of the membrane; sequence GR. A helical transmembrane segment spans residues 135–155; the sequence is FAIQLMGFFFMTVFMFAIAIP. The Extracellular portion of the chain corresponds to 156 to 165; the sequence is YHHWTLQENR. A helical transmembrane segment spans residues 166 to 186; the sequence is IGFVIMYSLTFFFANFGPNAT. At 187–189 the chain is on the cytoplasmic side; sequence TFV.

Belongs to the major facilitator superfamily. Phosphate:H(+) symporter (TC 2.A.1.9) family.

The protein resides in the cell membrane. The enzyme catalyses phosphate(in) + H(+)(in) = phosphate(out) + H(+)(out). Low-affinity transporter for external inorganic phosphate (Pi). This chain is Low affinity inorganic phosphate transporter 2, found in Petunia hybrida (Petunia).